The primary structure comprises 484 residues: Malonate-semialdehyde dehydrogenase 1 (484 aa).

The NAD(+) site is built by phenylalanine 153, lysine 177, glutamate 180, arginine 181, serine 230, and threonine 252. Cysteine 285 acts as the Nucleophile in catalysis. An NAD(+)-binding site is contributed by glutamate 385.

The protein belongs to the aldehyde dehydrogenase family. IolA subfamily. Homotetramer.

The enzyme catalyses 3-oxopropanoate + NAD(+) + CoA + H2O = hydrogencarbonate + acetyl-CoA + NADH + H(+). It carries out the reaction 2-methyl-3-oxopropanoate + NAD(+) + CoA + H2O = propanoyl-CoA + hydrogencarbonate + NADH + H(+). It functions in the pathway polyol metabolism; myo-inositol degradation into acetyl-CoA; acetyl-CoA from myo-inositol: step 7/7. Catalyzes the oxidation of malonate semialdehyde (MSA) and methylmalonate semialdehyde (MMSA) into acetyl-CoA and propanoyl-CoA, respectively. Is involved in a myo-inositol catabolic pathway. Bicarbonate, and not CO2, is the end-product of the enzymatic reaction. The protein is Malonate-semialdehyde dehydrogenase 1 of Geobacillus thermodenitrificans (strain NG80-2).